Reading from the N-terminus, the 1682-residue chain is 1-phosphatidylinositol 4,5-bisphosphate phosphodiesterase eta-1 (1682 aa).

A PH domain is found at 20-128 (SVMQSGTQMI…WITGLKYLMA (109 aa)). 3 EF-hand domains span residues 142–177 (THDQ…LNVN), 178–214 (LPRR…MSLR), and 226–246 (DKKD…EQKM). Residues aspartate 155, asparagine 157, aspartate 159, and glutamate 166 each contribute to the Ca(2+) site. Positions 299–444 (QDMDQPLCNY…LKGKILVKGK (146 aa)) constitute a PI-PLC X-box domain. The active site involves histidine 314. Ca(2+) is bound by residues asparagine 315, glutamate 344, and aspartate 346. The active site involves histidine 358. Glutamate 393 serves as a coordination point for Ca(2+). Residues lysine 442 and lysine 444 each coordinate substrate. The segment at 534 to 588 (LDVKESGKKSHGRSLMANFGKHKQKATKSRSKSYSTDDEDDSLQNPGKEGGQLYR) is disordered. A compositionally biased stretch (basic residues) spans 553–564 (GKHKQKATKSRS). Positions 602–715 (LSDLVVYTNS…GYILKPQQMC (114 aa)) constitute a PI-PLC Y-box domain. Residues serine 628 and arginine 655 each contribute to the substrate site. Positions 716–844 (KGTFNPFSGD…PGYRHVYLEG (129 aa)) constitute a C2 domain. Ca(2+) is bound by residues isoleucine 759, aspartate 761, aspartate 785, aspartate 814, histidine 815, and aspartate 816. A compositionally biased stretch (basic and acidic residues) spans 992–1018 (DTDGKENCLAGDKDDRRKGAATRKDPH). 3 disordered regions span residues 992–1083 (DTDG…LSPR), 1296–1321 (NLPG…HSQV), and 1581–1603 (RAKE…GGVV). The span at 1019-1033 (FSNFNKKLSSSSSAL) shows a compositional bias: low complexity. 2 stretches are compositionally biased toward polar residues: residues 1040–1050 (QGPTASVSNPE) and 1065–1074 (NMTNDCQENH). A compositionally biased stretch (basic and acidic residues) spans 1581-1590 (RAKEKQEAGK).

Ca(2+) is required as a cofactor. Expressed in brain and to a lower extent in lung. In brain, it is found in cerebrum, cerebellum and spinal cord.

It localises to the cytoplasm. The protein localises to the membrane. It carries out the reaction a 1,2-diacyl-sn-glycero-3-phospho-(1D-myo-inositol-4,5-bisphosphate) + H2O = 1D-myo-inositol 1,4,5-trisphosphate + a 1,2-diacyl-sn-glycerol + H(+). In terms of biological role, the production of the second messenger molecules diacylglycerol (DAG) and inositol 1,4,5-trisphosphate (IP3) is mediated by calcium-activated phosphatidylinositol-specific phospholipase C enzymes. In Mus musculus (Mouse), this protein is 1-phosphatidylinositol 4,5-bisphosphate phosphodiesterase eta-1.